Here is a 90-residue protein sequence, read N- to C-terminus: Delta-aiptatoxin-Adi1a (90 aa).

An N-terminal signal peptide occupies residues 1–21 (MKTAMLIAVLGFCAALCFVES). The propeptide occupies 22–44 (SHEEEREAAVYLTDLVSKAESAI). Intrachain disulfides connect Cys50/Cys86, Cys52/Cys77, and Cys70/Cys87.

This sequence belongs to the sea anemone sodium channel inhibitory toxin family.

It localises to the secreted. The protein localises to the nematocyst. Functionally, cardioactive peptide that acts on voltage-gated sodium channels (hNav1.5/SCN5A) and voltage-gated potassium channels (Kv). The activity on sodium channels consists of inhibition on sodium current inactivation with no significant effect on current activation. This effect may be caused by direct interaction of the toxin with sodium channel site-3. The activity on potassium channels consists of a significant increase of the amplitude of the transient component of the potassium current, shifting the current threshold to more negative membrane potentials. These effects are concentration-dependent and reversible and may be due to a direct interaction between the toxin and the voltage-sensing domain of the channel. Physiologically, this toxin increases the amplitude of cardiomyocyte contraction and slows the late phase of the twitch relaxation velocity with no induction of spontaneous twitching. It increases action potential duration of cardiomyocytes with no effect on its threshold and on the cell resting potential. On insects, it shows neurotoxic activity to the blowfly larvae S.falculaty, causing an immediate spasm that progressed to body contraction and paralysis. This chain is Delta-aiptatoxin-Adi1a, found in Exaiptasia diaphana (Tropical sea anemone).